Reading from the N-terminus, the 395-residue chain is Serine/threonine-protein kinase BIK1 (395 aa).

A lipid anchor (N-myristoyl glycine) is attached at Gly-2. Cys-4 carries the S-palmitoyl cysteine lipid modification. Ser-26 carries the post-translational modification Phosphoserine. A Glycyl lysine isopeptide (Lys-Gly) (interchain with G-Cter in ubiquitin) cross-link involves residue Lys-31. Ser-32, Ser-33, and Ser-34 each carry phosphoserine. Thr-35 is modified (phosphothreonine). A Glycyl lysine isopeptide (Lys-Gly) (interchain with G-Cter in ubiquitin) cross-link involves residue Lys-41. Thr-42 bears the Phosphothreonine mark. Residue Ser-48 is modified to Phosphoserine; by autocatalysis and BAK1. Position 50 is a phosphothreonine (Thr-50). At Ser-54 the chain carries Phosphoserine; by autocatalysis. The residue at position 56 (Thr-56) is a Phosphothreonine; by autocatalysis. At Thr-64 the chain carries Phosphothreonine. A Protein kinase domain is found at 67–356 (FRPDSVIGEG…RALQQLQDNL (290 aa)). Residue Ser-71 is modified to Phosphoserine; by autocatalysis and BAK1. ATP is bound at residue 73 to 81 (IGEGGFGCV). Ser-89 carries the phosphoserine; by EFR modification. Residues 89 to 90 (ST) carry the Required for physical interaction with and phosphorylation of downstream signaling proteins (e.g. WRKY33, WRKY50, WRKY51 and WRKY57) to activate EFR-mediated immune signaling motif. Thr-90 is modified (phosphothreonine; by EFR). Residue Lys-95 forms a Glycyl lysine isopeptide (Lys-Gly) (interchain with G-Cter in ubiquitin) linkage. Residue Lys-105 coordinates ATP. The residue at position 120 (Thr-120) is a Phosphothreonine; by EFR. Ser-129 is subject to Phosphoserine; by autocatalysis. Position 129 is a phosphoserine; by EFR (Ser-129). At Tyr-150 the chain carries Phosphotyrosine. Tyr-168 carries the phosphotyrosine; by autocatalysis modification. Glycyl lysine isopeptide (Lys-Gly) (interchain with G-Cter in ubiquitin) cross-links involve residues Lys-170 and Lys-186. Position 193 is a phosphoserine (Ser-193). Residue Asp-202 is the Proton acceptor of the active site. Ser-206 is subject to Phosphoserine; by autocatalysis and BAK1. At Tyr-214 the chain carries Phosphotyrosine; by autocatalysis. Position 219 is a phosphoserine (Ser-219). Ser-233 is modified (phosphoserine; by autocatalysis). Ser-236 carries the post-translational modification O-UMP-serine; by Xanthomonas campestris effector XopAC/AvrAC; alternate. Ser-236 bears the Phosphoserine; by autocatalysis and BAK1; alternate mark. Residue Thr-237 is modified to O-UMP-threonine; by Xanthomonas campestris effector XopAC/AvrAC; alternate. Thr-237 bears the Phosphothreonine; by autocatalysis and BAK1; alternate mark. The residue at position 242 (Thr-242) is a Phosphothreonine; by autocatalysis and BAK1. Tyr-243 is subject to Phosphotyrosine. Tyr-250 is modified (phosphotyrosine; by autocatalysis). 2 positions are modified to phosphoserine; by autocatalysis: Ser-252 and Ser-253. Residue Lys-286 forms a Glycyl lysine isopeptide (Lys-Gly) (interchain with G-Cter in ubiquitin) linkage. Phosphothreonine; by autocatalysis is present on Thr-314. Residue Lys-337 forms a Glycyl lysine isopeptide (Lys-Gly) (interchain with G-Cter in ubiquitin) linkage. Position 341 is a phosphothreonine (Thr-341). Positions 354–365 (DNLGKPSQTNPV) are enriched in polar residues. The segment at 354-395 (DNLGKPSQTNPVKDTKKLGFKTGTTKSSEKRFTQKPFGRHLV) is disordered. Lys-358 is covalently cross-linked (Glycyl lysine isopeptide (Lys-Gly) (interchain with G-Cter in ubiquitin)). The residue at position 360 (Ser-360) is a Phosphoserine; by autocatalysis and BAK1. Thr-362 carries the phosphothreonine; by autocatalysis and BAK1 modification. A Glycyl lysine isopeptide (Lys-Gly) (interchain with G-Cter in ubiquitin) cross-link involves residue Lys-366. Thr-368 is modified (phosphothreonine; by autocatalysis and BAK1). Thr-375 and Thr-377 each carry phosphothreonine.

It belongs to the protein kinase superfamily. Ser/Thr protein kinase family. As to quaternary structure, interacts with FLS2. Activation of FLS2 by flagellin (flg22) induces the dissociation of the complex. Interacts with BAK1. Interacts with the Xanthomonas campestris effector XopAC/AvrAC. Interacts with CPK28. Interacts with PEPR1. Interacts with PP2C38. Interacts with BRI1. Interacts with RBOHD. Binds to EFR when not phosphorylated at Ser-89 and Thr-90, in the absence of pathogen elicitor; dissociates upon pathogen-associated molecular pattern (PAMP)-triggered activation by EFR-mediated phosphorylation. Interacts directly with and phosphorylates WRKY transcription factors in the nucleus involved in the jasmonic acid (JA) and salicylic acid (SA) regulation (e.g. WRKY33, WRKY50, WRKY51 and WRKY57) to modulate defense hormones during plant immunity. Binds to ATL44/RHA3A and ATL45/RHA3B. Binds to SIK1 to be phosphorylated and stabilized. Phosphorylated by SIK1 to be stabilized. Phosphorylated by FLS2 and BAK1. Autophosphorylated. Autophosphorylation is reduced in presence of the Xanthomonas campestris effector XopAC/AvrAC. Phosphorylated, especially by EFR at Ser-89 and Thr-90, in response to the microbe-associated molecular pattern (MAMP) flg22. Phosphorylation in response to flg22 is abolished in presence of the Xanthomonas campestris effector XopAC/AvrAC. Phosphorylated at Ser-233, Ser-236 and Thr-237 by PEPR1. Phosphorylated at Tyr-150, Tyr-243 and Tyr-250. Tyrosine phosphorylation is required for BIK1 function in plant innate immunity. Post-translationally, uridylylated at Ser-236 and Thr-237 by the Xanthomonas campestris effector XopAC/AvrAC. This conceals conserved phosphorylation sites in the activation loop, reducing BIK1 kinase activity and consequently inhibiting downstream signaling. In terms of processing, monoubiquitinated by ATL44/RHA3A and ATL45/RHA3B following phosphorylation upon the recognition of microbe-associated molecular patterns (MAMPs, e.g. flg22) by pattern recognition receptors (PRRs), then released from the FLS2/BAK1 complex and internalized dynamically into endocytic compartments followed by the activation of immune signaling.

It localises to the cell membrane. It is found in the endosome membrane. The protein resides in the nucleus. It catalyses the reaction L-seryl-[protein] + ATP = O-phospho-L-seryl-[protein] + ADP + H(+). The catalysed reaction is L-threonyl-[protein] + ATP = O-phospho-L-threonyl-[protein] + ADP + H(+). Kinase activation is repressed by the phosphatase PP2C38. In terms of biological role, plays a central role in immune responses. Required to activate the resistance responses to necrotrophic pathogens, including the regulation of defense hormone expression (e.g. jasmonic acid (JA) and salicylic acid (SA)). Phosphorylates FLS2 and BAK1. Involved in pathogen-associated molecular pattern (PAMP)-triggered immunity (PTI) signaling, including calcium signaling, and defense responses downstream of FLS2; upon PAMP recognition, first phosphorylated by FLS2 and SIK1 prior to being monoubiquitinated by ATL44/RHA3A and ATL45/RHA3B at the plasma membrane, then internalized dynamically into endocytic compartments together with FLS2. Acts additively with PBL1 in PTI defenses. Acts as a positive regulator of the PAMP flg22-induced increase of cytosolic calcium. Upon flg22 perception, phosphorylates and activates the calcium-permeable channel OSCA1.3, promoting stomatal closure. Phosphorylates the NADPH oxidase RBOHD at specific sites in a calcium-independent manner to enhance reactive oxygen species (ROS) generation upon flg22 perception. ROS production in response to flg22 controls stomatal movement and restriction of bacterial entry into leaf tissues. Seems not required for flg22-induced MAPK activation. Required for Pep1-induced defenses. Pep1 is an endogenous elicitor that potentiates PAMP-inducible plant responses. In association with PEPR1, acts downstream of the canonical ethylene signaling cascade to regulate ethylene responses. Involved in ethylene signaling. Destabilizes EIN3, the key transcription activator in ethylene signaling, and represses EIN3-dependent transcription. Acts as a negative regulator in brassinosteroid (BR) signaling. Functions in BR signaling by direct interaction with the BR receptor BRI1 cytosolic kinase domain. Required during SCOOP small peptides (e.g. SCOOP10 and SCOOP12) perception and signaling; receptor-like cytosolic kinases (RLCK) activated by BAK1/SERK3 and SERK4 coreceptors when associated with MIK2 upon the perception of SCOOP peptides. Functionally, (Microbial infection) Xanthomonas campestris effector AvrAC/XopAC-mediated uridylylation prevents activation by phosphorylation at the same residues, thus affecting immune responses and reducing defense responses toward X.campestris, mediating avrAC/XopAC virulence functions. The sequence is that of Serine/threonine-protein kinase BIK1 from Arabidopsis thaliana (Mouse-ear cress).